We begin with the raw amino-acid sequence, 547 residues long: Sodium/hydrogen exchanger 9B2 (547 aa).

Positions 1 to 68 (MEDEDKTAEC…PQDSPTEPNG (68 aa)) are disordered. Over 1–86 (MEDEDKTAEC…ACPPRGCLAR (86 aa)) the chain is Cytoplasmic. Positions 23-45 (APPHHELQEERVMSLRGTDRSEP) are enriched in basic and acidic residues. S49 bears the Phosphoserine mark. The chain crosses the membrane as a helical span at residues 87 to 104 (VITNGTMVVLLWAMVWSV). The Extracellular segment spans residues 105 to 113 (TGPECLPGG). The helical transmembrane segment at 114-133 (NLFGIIILFYCSITGGKLFG) threads the bilayer. Residues 134 to 144 (LIKFPTLPPLP) lie on the Cytoplasmic side of the membrane. A helical membrane pass occupies residues 145 to 161 (PLLGMLLAGFLLRNIPV). The Extracellular segment spans residues 162 to 171 (INDSVRIQHK). The helical transmembrane segment at 172-189 (WSSSLRSIALSVILVRAG) threads the bilayer. The Cytoplasmic portion of the chain corresponds to 190–200 (LGLDSKALRKL). The helical transmembrane segment at 201–227 (KGVCVRLAMGPCIVEACASAILSHFLM) threads the bilayer. Topologically, residues 228–233 (GLPWQW) are extracellular. Residues 234–242 (GFILGFVVG) traverse the membrane as a helical segment. Residues 243–270 (AVSPAVVVPSMLLLQEGGYGVGKGIPTL) are Cytoplasmic-facing. Positions 244, 275, 278, and 279 each coordinate Na(+). Residues 271-290 (LMAAGSFDDILAITGFNTCL) traverse the membrane as a helical segment. Topologically, residues 291–300 (GVAFSTGSTV) are extracellular. Residues 301–324 (FNIFRGILEVVIGVAAGSFLGFFI) form a helical membrane-spanning segment. Topologically, residues 325–339 (QYFPSRDQDNLVWKR) are cytoplasmic. The helical transmembrane segment at 340–357 (AFLVLGFAVLAVFSSVYF) threads the bilayer. The Extracellular portion of the chain corresponds to 358-361 (SFPG). Residues 362 to 373 (SGGLCTLVMAFL) traverse the membrane as a helical segment. At 374–390 (AGMRWTDKKSEVEKVIA) the chain is on the cytoplasmic side. The helical transmembrane segment at 391 to 411 (VTWDVFQPLLFGLIGAEVSIV) threads the bilayer. Residues 412 to 417 (SLRAET) are Extracellular-facing. A helical transmembrane segment spans residues 418–440 (VGLCVATLSIAVLIRILTTFLMV). Topologically, residues 441–461 (CFAGFNIKEKIFISFAWLPKA) are cytoplasmic. The helical transmembrane segment at 462–473 (TVQAAIGSVALD) threads the bilayer. The Extracellular segment spans residues 474–486 (TARSHGEKQLEDY). The chain crosses the membrane as a helical span at residues 487–509 (GMDVLTVAFLAILITAPIGSLLI). The Cytoplasmic portion of the chain corresponds to 510–547 (GLLGPRVLQKSEHRTEEEVQGETSAHIQRKPEDSITEA). A disordered region spans residues 522–547 (HRTEEEVQGETSAHIQRKPEDSITEA). Residues 538–547 (RKPEDSITEA) show a composition bias toward basic and acidic residues.

The protein belongs to the monovalent cation:proton antiporter 1 (CPA1) transporter (TC 2.A.36) family. As to quaternary structure, homodimer; dimerization is essential for SLC9B2 activity. Lipids seem to play a role in the stabilization of the dimerization subdomain. In terms of tissue distribution, widely expressed. However expression seems to be restricted to specific cell types within individual organs, e.g. osteoclasts in the bone, distal tubules of the kidney or beta-cells of Langerhans islets. In sperm specifically present in the principal piece of sperm tail (at protein level).

It is found in the cell membrane. Its subcellular location is the mitochondrion membrane. It localises to the endosome membrane. The protein resides in the lysosome membrane. The protein localises to the recycling endosome membrane. It is found in the cytoplasmic vesicle. Its subcellular location is the secretory vesicle. It localises to the synaptic vesicle membrane. The protein resides in the cell projection. The protein localises to the cilium. It is found in the flagellum membrane. Its subcellular location is the basolateral cell membrane. It localises to the apical cell membrane. It carries out the reaction Na(+)(in) + H(+)(out) = Na(+)(out) + H(+)(in). It catalyses the reaction Li(+)(out) + H(+)(in) = Li(+)(in) + H(+)(out). The enzyme catalyses Li(+)(in) + Na(+)(out) = Li(+)(out) + Na(+)(in). With respect to regulation, allosterically inhibited by the N-terminal domain. Inhibited by phloretin. Functionally, electroneutral Na(+) Li(+)/H(+) antiporter that extrudes Na(+) or Li(+) in exchange for external protons across the membrane. Uses the proton gradient/membrane potential to extrude sodium. Contributes to the regulation of intracellular pH and sodium homeostasis. Also able to mediate Na(+)/Li(+) antiporter activity in kidney. May play a physiological role in renal tubular function and blood pressure homeostasis. Plays an important role for insulin secretion and clathrin-mediated endocytosis in beta-cells. Involved in sperm motility and fertility. It is controversial whether SLC9B2 plays a role in osteoclast differentiation or not. This chain is Sodium/hydrogen exchanger 9B2, found in Mus musculus (Mouse).